The primary structure comprises 459 residues: Glutamate--tRNA ligase 2 (459 aa).

The 'HIGH' region motif lies at 8 to 18 (PSPTGYIHIGN). Positions 249-253 (GLSKR) match the 'KMSKS' region motif. Position 252 (Lys252) interacts with ATP.

The protein belongs to the class-I aminoacyl-tRNA synthetase family. Glutamate--tRNA ligase type 1 subfamily. Monomer.

It localises to the cytoplasm. The enzyme catalyses tRNA(Glu) + L-glutamate + ATP = L-glutamyl-tRNA(Glu) + AMP + diphosphate. Catalyzes the attachment of glutamate to tRNA(Glu) in a two-step reaction: glutamate is first activated by ATP to form Glu-AMP and then transferred to the acceptor end of tRNA(Glu). This chain is Glutamate--tRNA ligase 2, found in Bartonella henselae (strain ATCC 49882 / DSM 28221 / CCUG 30454 / Houston 1) (Rochalimaea henselae).